Reading from the N-terminus, the 113-residue chain is Molt-inhibiting hormone (113 aa).

Residues 1–35 (MMSRTESRYSSQRTWLLSMVVLAALWSISVQRATA) form the signal peptide. 3 cysteine pairs are disulfide-bonded: cysteine 42-cysteine 79, cysteine 59-cysteine 75, and cysteine 62-cysteine 88.

It belongs to the arthropod CHH/MIH/GIH/VIH hormone family.

The protein localises to the secreted. In terms of biological role, inhibits Y-organs where molting hormone (ecdysteroid) is secreted. A molting cycle is initiated when MIH secretion diminishes or stops. The sequence is that of Molt-inhibiting hormone from Metacarcinus magister (Dungeness crab).